A 151-amino-acid chain; its full sequence is MKSFFVVFAIVFQATLVALSLAADADDGQCINTTAVVEYFNPFIQECCPNEEPPSRDCVTCGLKGAGLVVTEDGKEMFDFDKYRRKLRGRIIRNERLIYRSLRECCRRRLCEAEPTFTCFHDKVKEQCPGDRTTSLLRSPLKDLPLRSPSC.

A signal peptide spans 1–22 (MKSFFVVFAIVFQATLVALSLA).

This sequence belongs to the scoloptoxin-17 family. Post-translationally, contains 5 disulfide bonds. In terms of tissue distribution, expressed by the venom gland.

The protein resides in the secreted. This Ethmostigmus rubripes (Giant centipede) protein is U-scoloptoxin(17)-Er2a.